The sequence spans 118 residues: UPF0231 protein PM0457 (118 aa).

This sequence belongs to the UPF0231 family.

In Pasteurella multocida (strain Pm70), this protein is UPF0231 protein PM0457.